The primary structure comprises 207 residues: Probable nicotinate-nucleotide adenylyltransferase (207 aa).

The protein belongs to the NadD family.

The catalysed reaction is nicotinate beta-D-ribonucleotide + ATP + H(+) = deamido-NAD(+) + diphosphate. It functions in the pathway cofactor biosynthesis; NAD(+) biosynthesis; deamido-NAD(+) from nicotinate D-ribonucleotide: step 1/1. Catalyzes the reversible adenylation of nicotinate mononucleotide (NaMN) to nicotinic acid adenine dinucleotide (NaAD). This is Probable nicotinate-nucleotide adenylyltransferase from Desulfitobacterium hafniense (strain DSM 10664 / DCB-2).